Reading from the N-terminus, the 66-residue chain is Large ribosomal subunit protein bL33c (66 aa).

This sequence belongs to the bacterial ribosomal protein bL33 family.

Its subcellular location is the plastid. The protein resides in the chloroplast. This chain is Large ribosomal subunit protein bL33c, found in Vitis vinifera (Grape).